A 215-amino-acid polypeptide reads, in one-letter code: Nitrate/nitrite response regulator protein NarP (215 aa).

A Response regulatory domain is found at 8-124 (QVMIVDDHPL…VLLEAIRAGA (117 aa)). 4-aspartylphosphate is present on Asp-59. Residues 147–212 (EEDPFSVLTE…AATILFLQQR (66 aa)) enclose the HTH luxR-type domain. Positions 171 to 190 (NKQIASVLNISEQTVKVHIR) form a DNA-binding region, H-T-H motif.

This protein activates the expression of the nitrate reductase (narGHJI) and formate dehydrogenase-N (fdnGHI) operons and represses the transcription of the fumarate reductase (frdABCD) operon in response to a nitrate/nitrite induction signal transmitted by either the NarX or NarQ proteins. The protein is Nitrate/nitrite response regulator protein NarP (narP) of Escherichia coli (strain K12).